The chain runs to 310 residues: MIQAIELGKVAVLYGGNSSEREISLIGGRAVHAALCAAGIDAHLLDTGDPNRIWTLKDEHFSRAFVMLHGRGGEDGEIQAILQWLGIPYTGSRVLACALAMDKVVCKKVWQSAGLPVLADVLVTPESRFETLVEQLHCQDFVIKPALEGSSVGVSRVKNQEQLAAAIPFAGGARAKIMAEPWIVGRELTYGIVNDTVLPAIEIVAGNDHDFYDYDAKYHAANTQYLCPAPIDAALDARCREIAFAAFQAIGARGWGRVDMIVDAQNRPYLLEINLVPGMTTHSLVPMAAQQIGMDFSALVQSILAQTLTS.

In terms of domain architecture, ATP-grasp spans 107–305 (KKVWQSAGLP…FSALVQSILA (199 aa)). ATP is bound at residue 134–189 (EQLHCQDFVIKPALEGSSVGVSRVKNQEQLAAAIPFAGGARAKIMAEPWIVGRELT). Residues D259, E272, and N274 each coordinate Mg(2+).

This sequence belongs to the D-alanine--D-alanine ligase family. Mg(2+) is required as a cofactor. It depends on Mn(2+) as a cofactor.

It is found in the cytoplasm. It carries out the reaction 2 D-alanine + ATP = D-alanyl-D-alanine + ADP + phosphate + H(+). The protein operates within cell wall biogenesis; peptidoglycan biosynthesis. Functionally, cell wall formation. This chain is D-alanine--D-alanine ligase, found in Dichelobacter nodosus (strain VCS1703A).